We begin with the raw amino-acid sequence, 692 residues long: DNA ligase (692 aa).

NAD(+)-binding positions include 40–44 (DAAYD), 89–90 (SL), and E121. K123 (N6-AMP-lysine intermediate) is an active-site residue. The NAD(+) site is built by R144, E181, K297, and K321. Residues C415, C417, C439, and C445 each contribute to the Zn(2+) site. The region spanning 614–692 (KTDTAVAGKT…EDEWLEMVGS (79 aa)) is the BRCT domain.

It belongs to the NAD-dependent DNA ligase family. LigA subfamily. It depends on Mg(2+) as a cofactor. The cofactor is Mn(2+).

It carries out the reaction NAD(+) + (deoxyribonucleotide)n-3'-hydroxyl + 5'-phospho-(deoxyribonucleotide)m = (deoxyribonucleotide)n+m + AMP + beta-nicotinamide D-nucleotide.. DNA ligase that catalyzes the formation of phosphodiester linkages between 5'-phosphoryl and 3'-hydroxyl groups in double-stranded DNA using NAD as a coenzyme and as the energy source for the reaction. It is essential for DNA replication and repair of damaged DNA. The chain is DNA ligase from Phenylobacterium zucineum (strain HLK1).